A 119-amino-acid polypeptide reads, in one-letter code: Large ribosomal subunit protein uL18 (119 aa).

This sequence belongs to the universal ribosomal protein uL18 family. Part of the 50S ribosomal subunit; part of the 5S rRNA/L5/L18/L25 subcomplex. Contacts the 5S and 23S rRNAs.

This is one of the proteins that bind and probably mediate the attachment of the 5S RNA into the large ribosomal subunit, where it forms part of the central protuberance. The protein is Large ribosomal subunit protein uL18 of Xylella fastidiosa (strain 9a5c).